A 497-amino-acid polypeptide reads, in one-letter code: Cysteine--tRNA ligase (497 aa).

Cysteine 34 provides a ligand contact to Zn(2+). Positions 36 to 46 match the 'HIGH' region motif; that stretch reads PTVYDFAHIGN. Cysteine 243, histidine 268, and glutamate 272 together coordinate Zn(2+). A 'KMSKS' region motif is present at residues 301–305; sequence KMAKS. Lysine 304 serves as a coordination point for ATP. Positions 478-497 are disordered; that stretch reads LMDYKDPETGERRTKWEVKR. Residues 480–497 show a composition bias toward basic and acidic residues; the sequence is DYKDPETGERRTKWEVKR.

Belongs to the class-I aminoacyl-tRNA synthetase family. In terms of assembly, monomer. Zn(2+) serves as cofactor.

The protein resides in the cytoplasm. It catalyses the reaction tRNA(Cys) + L-cysteine + ATP = L-cysteinyl-tRNA(Cys) + AMP + diphosphate. This is Cysteine--tRNA ligase from Chelativorans sp. (strain BNC1).